A 266-amino-acid polypeptide reads, in one-letter code: UPF0294 protein YafD (266 aa).

It belongs to the UPF0294 family.

The protein resides in the cytoplasm. The sequence is that of UPF0294 protein YafD (yafD) from Escherichia coli O157:H7.